A 222-amino-acid polypeptide reads, in one-letter code: Beta-amylase (222 aa).

Thr36 lines the substrate pocket. Glu74 serves as the catalytic Proton acceptor. Residues 75 to 76 (NA) and Arg114 contribute to the substrate site.

It belongs to the glycosyl hydrolase 14 family.

It carries out the reaction Hydrolysis of (1-&gt;4)-alpha-D-glucosidic linkages in polysaccharides so as to remove successive maltose units from the non-reducing ends of the chains.. This is Beta-amylase (BMY1) from Secale cereale (Rye).